Here is a 125-residue protein sequence, read N- to C-terminus: Small ribosomal subunit protein uS12 (125 aa).

D89 carries the 3-methylthioaspartic acid modification. The disordered stretch occupies residues 106–125 (GVKDRKQSRSKYGAKRPKKA). The segment covering 113–125 (SRSKYGAKRPKKA) has biased composition (basic residues).

The protein belongs to the universal ribosomal protein uS12 family. As to quaternary structure, part of the 30S ribosomal subunit. Contacts proteins S8 and S17. May interact with IF1 in the 30S initiation complex.

In terms of biological role, with S4 and S5 plays an important role in translational accuracy. Interacts with and stabilizes bases of the 16S rRNA that are involved in tRNA selection in the A site and with the mRNA backbone. Located at the interface of the 30S and 50S subunits, it traverses the body of the 30S subunit contacting proteins on the other side and probably holding the rRNA structure together. The combined cluster of proteins S8, S12 and S17 appears to hold together the shoulder and platform of the 30S subunit. The chain is Small ribosomal subunit protein uS12 from Azoarcus sp. (strain BH72).